The primary structure comprises 419 residues: Putative BTB/POZ domain-containing protein L85 (419 aa).

Positions 16–89 (TDLTIVLKDD…FYDKTSTNSE (74 aa)) constitute a BTB domain. Residues 250–290 (SSSNDSDEDASETESEHNSETESEHNSETESEHNSETESKH) are disordered. Basic and acidic residues predominate over residues 263–290 (ESEHNSETESEHNSETESEHNSETESKH).

The protein belongs to the mimivirus BTB/WD family.

This Acanthamoeba polyphaga (Amoeba) protein is Putative BTB/POZ domain-containing protein L85.